The sequence spans 361 residues: Queuine tRNA-ribosyltransferase (361 aa).

Residue Asp-92 is the Proton acceptor of the active site. Substrate is bound by residues 92 to 96 (DSGGF), Asp-146, Gln-189, and Gly-216. The segment at 247–253 (GVGKPAD) is RNA binding. Residue Asp-266 is the Nucleophile of the active site. Residues 271-275 (TRSGR) are RNA binding; important for wobble base 34 recognition. The Zn(2+) site is built by Cys-304, Cys-306, Cys-309, and His-335.

This sequence belongs to the queuine tRNA-ribosyltransferase family. As to quaternary structure, homodimer. Within each dimer, one monomer is responsible for RNA recognition and catalysis, while the other monomer binds to the replacement base PreQ1. The cofactor is Zn(2+).

The enzyme catalyses 7-aminomethyl-7-carbaguanine + guanosine(34) in tRNA = 7-aminomethyl-7-carbaguanosine(34) in tRNA + guanine. The protein operates within tRNA modification; tRNA-queuosine biosynthesis. In terms of biological role, catalyzes the base-exchange of a guanine (G) residue with the queuine precursor 7-aminomethyl-7-deazaguanine (PreQ1) at position 34 (anticodon wobble position) in tRNAs with GU(N) anticodons (tRNA-Asp, -Asn, -His and -Tyr). Catalysis occurs through a double-displacement mechanism. The nucleophile active site attacks the C1' of nucleotide 34 to detach the guanine base from the RNA, forming a covalent enzyme-RNA intermediate. The proton acceptor active site deprotonates the incoming PreQ1, allowing a nucleophilic attack on the C1' of the ribose to form the product. After dissociation, two additional enzymatic reactions on the tRNA convert PreQ1 to queuine (Q), resulting in the hypermodified nucleoside queuosine (7-(((4,5-cis-dihydroxy-2-cyclopenten-1-yl)amino)methyl)-7-deazaguanosine). The polypeptide is Queuine tRNA-ribosyltransferase (Rickettsia akari (strain Hartford)).